Here is a 171-residue protein sequence, read N- to C-terminus: Protein FAM209A (171 aa).

Positions 1–19 (MWTLKSSLVLLLCLTCSYA) are cleaved as a signal peptide. Residues 20–52 (FMFSSLRQKTSEPQGKVQYGEHFRIRQNLPEHT) are Extracellular-facing. The helical transmembrane segment at 53-73 (QGWLGSKWLWLLFVVVPFVIL) threads the bilayer. Residues 74–171 (QCQRDSEKNK…CEIWGEESSS (98 aa)) lie on the Cytoplasmic side of the membrane. A disordered region spans residues 81-107 (KNKEQSPPGLRGGQLHSPLKKKRNASP). Residues 114-139 (NTLMELEVELMKFVSKVRNLKRAMAT) adopt a coiled-coil conformation.

The protein belongs to the FAM209 family. Interacts with DPY19L2. Interacts with CYLC1; the interaction may be relevant for proper acrosome attachment to the nuclear envelope.

It localises to the nucleus inner membrane. In terms of biological role, may play a role in sperm acrosome biogenesis. In Homo sapiens (Human), this protein is Protein FAM209A.